A 298-amino-acid chain; its full sequence is Acetylglutamate kinase (298 aa).

Substrate is bound by residues 73 to 74 (GG), Arg-95, and Asn-188.

The protein belongs to the acetylglutamate kinase family. ArgB subfamily.

The protein resides in the cytoplasm. It carries out the reaction N-acetyl-L-glutamate + ATP = N-acetyl-L-glutamyl 5-phosphate + ADP. Its pathway is amino-acid biosynthesis; L-arginine biosynthesis; N(2)-acetyl-L-ornithine from L-glutamate: step 2/4. Catalyzes the ATP-dependent phosphorylation of N-acetyl-L-glutamate. The sequence is that of Acetylglutamate kinase from Nostoc punctiforme (strain ATCC 29133 / PCC 73102).